The primary structure comprises 366 residues: MADQNINKNEKVLTGQPTENQEPVHKRRERYKGTHPKTFKEKYKERQPEKYADTIEKVIQKGSTPAGMHISICVNEILEFLQIKPGQKGLDATLGYGGHTREMLKCLESQGHMYALDVDPIEIVKTRERLQNLGFGPEILTIKQLNFANIDEVVEEAGLFDFVLADLGVSSMQIDDPDRGFSFKTDGPLDLRLNPEKGISAAERLKTISQTELQGMLLENSDEPYSEEISKAIVNEIKRGNEIDTTTKLRDLISKVLVTIPENEQKEAIKKTCQRTFQALRIDVNNEYEVLYSFLEKLPNVLAKGGRVAILTFHSGEDRLVKKSFKNLQRAGIYSEVSDDVIRPSAEECNRNPRARSTKMRWAIKA.

The tract at residues 1–46 (MADQNINKNEKVLTGQPTENQEPVHKRRERYKGTHPKTFKEKYKER) is disordered. A compositionally biased stretch (basic residues) spans 25–37 (HKRRERYKGTHPK). Residues 97 to 99 (GGH), Asp117, Phe147, Asp166, and Gln173 contribute to the S-adenosyl-L-methionine site.

It belongs to the methyltransferase superfamily. RsmH family.

It is found in the cytoplasm. The catalysed reaction is cytidine(1402) in 16S rRNA + S-adenosyl-L-methionine = N(4)-methylcytidine(1402) in 16S rRNA + S-adenosyl-L-homocysteine + H(+). In terms of biological role, specifically methylates the N4 position of cytidine in position 1402 (C1402) of 16S rRNA. This chain is Ribosomal RNA small subunit methyltransferase H 1, found in Lachnoclostridium phytofermentans (strain ATCC 700394 / DSM 18823 / ISDg) (Clostridium phytofermentans).